The chain runs to 208 residues: uncharacterized protein (208 aa).

The disordered stretch occupies residues 124–208 (KKTGSSNART…PSFGKYSSLA (85 aa)). Residues 133–170 (TPDEGKKAKNAPEEEKVKTSGSEDAKGEESAVEGKEPE) are compositionally biased toward basic and acidic residues.

It is found in the golgi apparatus. This is an uncharacterized protein from Encephalitozoon cuniculi (strain GB-M1) (Microsporidian parasite).